A 634-amino-acid chain; its full sequence is Growth hormone receptor (634 aa).

An N-terminal signal peptide occupies residues 1 to 18 (MDLWQLLLTLAVAGSSDA). At 19–260 (FSGSEATPAF…NPSACEEDFQ (242 aa)) the chain is on the extracellular side. N-linked (GlcNAc...) asparagine glycosylation occurs at Asn46. A disulfide bond links Cys56 and Cys66. Asn73 is a glycosylation site (N-linked (GlcNAc...) asparagine). Cys97 and Cys108 are oxidised to a cystine. Asn111 is a glycosylation site (N-linked (GlcNAc...) asparagine). The cysteines at positions 122 and 136 are disulfide-linked. Residues 147 to 250 (PPVGLNWTLL…EVLLITFPQM (104 aa)) form the Fibronectin type-III domain. 3 N-linked (GlcNAc...) asparagine glycosylation sites follow: Asn152, Asn157, and Asn196. Positions 236-240 (YGKFS) match the WSXWS motif motif. The helical transmembrane segment at 261–284 (FPWFLIIIFGILGLTVTLFLLIFS) threads the bilayer. Over 285-634 (KQQRIKMLIL…STDQLNKIMP (350 aa)) the chain is Cytoplasmic. The interval 290-375 (KMLILPPVPV…HEKSLSIFGA (86 aa)) is required for JAK2 binding. The Box 1 motif signature appears at 293–301 (ILPPVPVPK). A UbE motif motif is present at residues 336-345 (DSWVEFIELD). Residue Ser337 is modified to Phosphoserine. The disordered stretch occupies residues 451–471 (KPRPLPIGGTESTHQAVHTQL). Residues 460-471 (TESTHQAVHTQL) show a composition bias toward polar residues. Phosphotyrosine occurs at positions 483 and 591.

Belongs to the type I cytokine receptor family. Type 1 subfamily. On growth hormone (GH) binding, forms homodimers and binds JAK2 via a box 1-containing domain. The soluble form (GHBP) is produced by phorbol ester-promoted proteolytic cleavage at the cell surface (shedding) by ADAM17/TACE. Shedding is inhibited by growth hormone (GH) binding to the receptor probably due to a conformational change in GHR rendering the receptor inaccessible to ADAM17. In terms of processing, on GH binding, phosphorylated on tyrosine residues in the cytoplasmic domain by JAK2. Post-translationally, ubiquitinated by the ECS(SOCS2) complex following ligand-binding and phosphorylation by JAK2, leading to its degradation by the proteasome. Regulation by the ECS(SOCS2) complex acts as a negative feedback loop of growth hormone receptor signaling. Ubiquitination is not sufficient for GHR internalization.

Its subcellular location is the cell membrane. The protein localises to the secreted. Functionally, receptor for pituitary gland growth hormone (GH1) involved in regulating postnatal body growth. On ligand binding, couples to the JAK2/STAT5 pathway. The soluble form (GHBP) acts as a reservoir of growth hormone in plasma and may be a modulator/inhibitor of GH signaling. The polypeptide is Growth hormone receptor (GHR) (Ovis aries (Sheep)).